A 125-amino-acid chain; its full sequence is Fluoride-specific ion channel FluC (125 aa).

4 consecutive transmembrane segments (helical) span residues 4 to 24 (LMLV…TVTA), 32 to 52 (AFPW…GLLV), 67 to 87 (LLLA…SLDV), and 100 to 120 (LAYV…GLWL). 2 residues coordinate Na(+): Gly-75 and Thr-78.

This sequence belongs to the fluoride channel Fluc/FEX (TC 1.A.43) family.

It localises to the cell inner membrane. The enzyme catalyses fluoride(in) = fluoride(out). Na(+) is not transported, but it plays an essential structural role and its presence is essential for fluoride channel function. Its function is as follows. Fluoride-specific ion channel. Important for reducing fluoride concentration in the cell, thus reducing its toxicity. This chain is Fluoride-specific ion channel FluC, found in Chelativorans sp. (strain BNC1).